The chain runs to 211 residues: MIIAIDGPAASGKGTLAKRLAAHYGLRHLDTGVIYRAVGMGMLALGAELTDEARAAAVAAALDPKTFDDPALKSQAVGEAASVVSALPKVRAALVDFQRRFADTPPGAVLDGRDIGTVICPQAEVKIFVVADPVVRARRRTLEAQSRGEPADEAVILADILKRDERDRSRAAAPLKQADDAHLLDNSHLDVESGLRAAIDIVEAVRAGRLR.

Gly7–Thr15 serves as a coordination point for ATP.

This sequence belongs to the cytidylate kinase family. Type 1 subfamily.

It localises to the cytoplasm. The catalysed reaction is CMP + ATP = CDP + ADP. The enzyme catalyses dCMP + ATP = dCDP + ADP. This is Cytidylate kinase from Rhodopseudomonas palustris (strain BisA53).